The following is a 194-amino-acid chain: Putative manganese efflux pump MntP (194 aa).

6 consecutive transmembrane segments (helical) span residues 3 to 23, 37 to 57, 69 to 89, 110 to 132, 147 to 167, and 172 to 192; these read PFSI…AAIG, LRAG…GWVL, DHWI…IAGL, LGLA…SLAF, CTFS…NLIG, and ILGG…HLGA.

It belongs to the MntP (TC 9.B.29) family.

The protein localises to the cell inner membrane. Its function is as follows. Probably functions as a manganese efflux pump. The polypeptide is Putative manganese efflux pump MntP (Xanthomonas oryzae pv. oryzae (strain MAFF 311018)).